A 191-amino-acid chain; its full sequence is Glucose-6-phosphate 1-dehydrogenase (191 aa).

Ala-2 carries the post-translational modification N-acetylalanine. A Phosphoserine modification is found at Ser-8. Thr-10 is subject to Phosphothreonine. Residues 38-45 and Tyr-86 contribute to the NADP(+) site; that span reads GASGDLAK. A D-glucose 6-phosphate-binding site is contributed by Asp-101. His-106 acts as the Proton acceptor in catalysis. Arg-163 is an NADP(+) binding site. Lys-173 is modified (N6-acetyllysine). Residues Tyr-179 and Trp-185 each coordinate NADP(+). Position 179 is a phosphotyrosine (Tyr-179).

The protein belongs to the glucose-6-phosphate dehydrogenase family. As to quaternary structure, homotetramer; dimer of dimers. Interacts with SIRT2; the interaction is enhanced by H(2)O(2) treatment. Forms a ternary complex with ALDOB and TP53; this interaction is direct. ALDOB stabilizes the complex inhibiting G6PD activity and keeping oxidative pentose phosphate metabolism in check. Post-translationally, acetylated by ELP3; acetylation inhibits its homodimerization and enzyme activity. Deacetylated by SIRT2; deacetylation stimulates its enzyme activity.

It is found in the cytoplasm. It localises to the cytosol. The protein localises to the membrane. It catalyses the reaction D-glucose 6-phosphate + NADP(+) = 6-phospho-D-glucono-1,5-lactone + NADPH + H(+). The protein operates within carbohydrate degradation; pentose phosphate pathway; D-ribulose 5-phosphate from D-glucose 6-phosphate (oxidative stage): step 1/3. Functionally, cytosolic glucose-6-phosphate dehydrogenase that catalyzes the first and rate-limiting step of the oxidative branch within the pentose phosphate pathway/shunt, an alternative route to glycolysis for the dissimilation of carbohydrates and a major source of reducing power and metabolic intermediates for fatty acid and nucleic acid biosynthetic processes. The chain is Glucose-6-phosphate 1-dehydrogenase (G6PD) from Didelphis virginiana (North American opossum).